A 624-amino-acid polypeptide reads, in one-letter code: ERAD-associated E3 ubiquitin-protein ligase ASI1 (624 aa).

Residues 1–69 (MNSSTSSENV…SEEIPPTLRS (69 aa)) are Perinuclear space-facing. Residues N2, N19, and N29 are each glycosylated (N-linked (GlcNAc...) asparagine). Residues 70–90 (VFDTIGFFFSPYAIFCFVIAI) traverse the membrane as a helical segment. Residues 91–116 (VLNRFVVFYAVLNNGSRRTLPLWLSN) lie on the Nuclear side of the membrane. Residues 117 to 137 (VFHVSAVVVLAMVSLGPLTLG) form a helical membrane-spanning segment. Residues 138-152 (KDFKILGDPAFAQEK) are Perinuclear space-facing. A helical membrane pass occupies residues 153-173 (FLLNIFYAFAYSYCVETIFTI). The Nuclear segment spans residues 174 to 209 (MRNSSPLEGTDYSLFELSIQFYTMTNNNTKFLDSPD). The helical transmembrane segment at 210–230 (YIIDCSMAILSRILIHLVEIF) threads the bilayer. At 231 to 273 (RLRNYRLLFSTIMNLCHICYLGIRVKQGGWKSLPFSVKFRHFP) the chain is on the perinuclear space side. Residues 274–294 (KLFSVSIICLSLLIFKLSCLI) form a helical membrane-spanning segment. Residues 295 to 624 (RWDPFGKSRN…CKVHPVSDSK (330 aa)) lie on the Nuclear side of the membrane. A disordered region spans residues 467–490 (TSDDEYSEDYEPSEVESLGDSDEE). The segment covering 468 to 490 (SDDEYSEDYEPSEVESLGDSDEE) has biased composition (acidic residues). Residues 568-608 (CAVCKVNERNTVLWPCRCFAICEDCRISLGLRGFSTCVCCR) form an RING-type; atypical zinc finger.

In terms of assembly, component of the Asi complex, which contains ASI1, ASI2 and ASI3. Interacts directly with ASI3. Post-translationally, glycosylation is not required for ASI1 function.

It is found in the nucleus inner membrane. It carries out the reaction S-ubiquitinyl-[E2 ubiquitin-conjugating enzyme]-L-cysteine + [acceptor protein]-L-lysine = [E2 ubiquitin-conjugating enzyme]-L-cysteine + N(6)-ubiquitinyl-[acceptor protein]-L-lysine.. Functionally, E3 ubiquitin-protein ligase which transfers ubiquitin to substrates promoting their degradation. Part of the nuclear inner membrane (INM)-specific branch of the ER-associated degradation (ERAD) pathway, required for the elimination of misfolded proteins in the INM, a specialized ER subdomain. Required for ERG11 degradation. Negative regulator of SPS-sensor signaling. Together with ASI2 and ASI3, prevents the unprocessed precursor forms of STP1 and STP2 that escape cytoplasmic anchoring from inducing SPS-sensor-regulated genes in the absence of inducing signals. Controls amino acid permease (AAP) gene expression in response to amino acid availability, a process mediated by the transcription factors STP1 and STP1. The protein is ERAD-associated E3 ubiquitin-protein ligase ASI1 (ASI1) of Saccharomyces cerevisiae (strain ATCC 204508 / S288c) (Baker's yeast).